Here is a 208-residue protein sequence, read N- to C-terminus: Small ribosomal subunit protein uS3 (208 aa).

Residues 38–106 enclose the KH type-2 domain; the sequence is IRDYIKARLY…EILIDIQEVR (69 aa).

This sequence belongs to the universal ribosomal protein uS3 family. Part of the 30S ribosomal subunit. Forms a tight complex with proteins S10 and S14.

Binds the lower part of the 30S subunit head. Binds mRNA in the 70S ribosome, positioning it for translation. In Syntrophobacter fumaroxidans (strain DSM 10017 / MPOB), this protein is Small ribosomal subunit protein uS3.